Reading from the N-terminus, the 192-residue chain is 3-hydroxyanthranilate 3,4-dioxygenase (192 aa).

Arg-50 contributes to the O2 binding site. 3 residues coordinate Fe cation: His-54, Glu-60, and His-102. Glu-60 provides a ligand contact to substrate. Substrate contacts are provided by Arg-106 and Glu-116. Residues Cys-131, Cys-134, Cys-168, and Cys-171 each coordinate a divalent metal cation.

It belongs to the 3-HAO family. Requires Fe(2+) as cofactor.

Its subcellular location is the cytoplasm. The enzyme catalyses 3-hydroxyanthranilate + O2 = (2Z,4Z)-2-amino-3-carboxymuconate 6-semialdehyde. Its pathway is cofactor biosynthesis; NAD(+) biosynthesis; quinolinate from L-kynurenine: step 3/3. In terms of biological role, catalyzes the oxidative ring opening of 3-hydroxyanthranilate to 2-amino-3-carboxymuconate semialdehyde, which spontaneously cyclizes to quinolinate. In Neosartorya fischeri (strain ATCC 1020 / DSM 3700 / CBS 544.65 / FGSC A1164 / JCM 1740 / NRRL 181 / WB 181) (Aspergillus fischerianus), this protein is 3-hydroxyanthranilate 3,4-dioxygenase (bna1).